We begin with the raw amino-acid sequence, 102 residues long: Small ribosomal subunit protein uS10 (102 aa).

It belongs to the universal ribosomal protein uS10 family. In terms of assembly, part of the 30S ribosomal subunit.

Functionally, involved in the binding of tRNA to the ribosomes. The chain is Small ribosomal subunit protein uS10 from Methanococcus maripaludis (strain C6 / ATCC BAA-1332).